The primary structure comprises 299 residues: DNA-binding transcriptional activator HetR (299 aa).

Serine 152 is a catalytic residue.

This sequence belongs to the peptidase S48 family. Homodimer; disulfide-linked.

In terms of biological role, might be involved in temporal and/or spatial regulation of nitrogen fixation. Dimerization is required for DNA-binding. Has both a protease and a DNA-binding activity. In Leptolyngbya boryana (Plectonema boryanum), this protein is DNA-binding transcriptional activator HetR.